We begin with the raw amino-acid sequence, 370 residues long: StAR-related lipid transfer protein 7, mitochondrial (370 aa).

A mitochondrion-targeting transit peptide spans 1-58 (MLPRRLLAAWLAGTRGGGLLALLANQCRFVTGLRVRRAQQIAQLYGRLYSESSRRVLL). The stretch at 86–111 (DEERIQEEELQRSINEMKRLEEMSNM) forms a coiled coil. 2 disordered regions span residues 111 to 138 (MFQSSGVQHHPPEPKAQTEGNEDSEGKE) and 343 to 370 (MSSEAKATSQSSERKNEGSCGPARIEYA). Positions 112 to 327 (FQSSGVQHHP…LHMATLKAKN (216 aa)) constitute an START domain.

Post-translationally, proteolytically cleaved by PARL. In terms of tissue distribution, expressed in nasal epithelial cells. Down-regulated in nasal epithelial cells in patients experiencing an asthma exacerbation as compared to stable asthmatics and healthy controls.

The protein localises to the mitochondrion. Its function is as follows. May play a protective role in mucosal tissues by preventing exaggerated allergic responses. This Homo sapiens (Human) protein is StAR-related lipid transfer protein 7, mitochondrial (STARD7).